The chain runs to 392 residues: Pannexin-3 (392 aa).

At 1–39 (MSLAHTAAEYMLSDALLPDRRGSRLKGLRLELPLDKMVK) the chain is on the cytoplasmic side. A helical membrane pass occupies residues 40-60 (FVTVGFPLLLMSLAFAQEFSS). At 61-113 (GSPISCFSPSNFSVRQAVFVDSSCWDSLAHYKQDEAGQYTVKSLWPHKALPYS) the chain is on the extracellular side. N-linked (GlcNAc...) asparagine glycosylation is present at Asn71. Residues 114 to 134 (LLALAVAMYLPVLLWQYAAVP) form a helical membrane-spanning segment. The Cytoplasmic portion of the chain corresponds to 135–215 (ALSSDLLFII…VATYLLRNAL (81 aa)). Residues 216–236 (LLLFTSATYLYLGHFHLDVFF) traverse the membrane as a helical segment. The Extracellular portion of the chain corresponds to 237–267 (QEEFSCSIKTGLLHEETHVPELITCRLTSLS). The chain crosses the membrane as a helical span at residues 268–288 (VFQIVSVSSVAIYTVLVPVII). Residues 289–392 (YNLTRLCRWD…LTQHTYDEHP (104 aa)) are Cytoplasmic-facing.

Belongs to the pannexin family. As to quaternary structure, homoheptameric. As to expression, skin.

The protein resides in the cell membrane. Its subcellular location is the cell junction. The protein localises to the gap junction. It is found in the endoplasmic reticulum membrane. It carries out the reaction Ca(2+)(in) = Ca(2+)(out). The enzyme catalyses ATP(in) = ATP(out). In terms of biological role, regulator of osteoblast differentiation by functionning as a Ca(2+) channel in the endoplasmic reticulum which regulates calmodulin (CaM) pathways. Allows ATP release into the extracellular space and activation or purinergic receptors. This Rattus norvegicus (Rat) protein is Pannexin-3 (Panx3).